The chain runs to 461 residues: Kynurenine 3-monooxygenase (461 aa).

FAD-binding positions include L17–A18, E37–R39, and A56. L-kynurenine is bound by residues R84 and Y98. Residues R111, L135, D311, and M324–N325 contribute to the FAD site. L-kynurenine is bound by residues N369 and Y404.

This sequence belongs to the aromatic-ring hydroxylase family. KMO subfamily. FAD is required as a cofactor.

It catalyses the reaction L-kynurenine + NADPH + O2 + H(+) = 3-hydroxy-L-kynurenine + NADP(+) + H2O. Its pathway is cofactor biosynthesis; NAD(+) biosynthesis; quinolinate from L-kynurenine: step 1/3. The protein operates within siderophore biosynthesis; quinolobactin biosynthesis. In terms of biological role, catalyzes the hydroxylation of L-kynurenine (L-Kyn) to form 3-hydroxy-L-kynurenine (L-3OHKyn). Probably required for the synthesis of quinolinic acid and the siderophore quinolobactin. This is Kynurenine 3-monooxygenase from Pseudomonas fluorescens.